Reading from the N-terminus, the 348-residue chain is Carbamoyl phosphate synthase small chain (348 aa).

Residues 1–167 (MKRYLITSDG…VKNIRGKGER (167 aa)) are CPSase. L-glutamine is bound by residues S45, G213, and G215. In terms of domain architecture, Glutamine amidotransferase type-1 spans 168 to 348 (RILFIDLGSK…RRRTEDAAKG (181 aa)). C242 functions as the Nucleophile in the catalytic mechanism. L-glutamine contacts are provided by F243, Q246, N282, G284, and Y285. Active-site residues include H321 and E323.

This sequence belongs to the CarA family. As to quaternary structure, composed of two chains; the small (or glutamine) chain promotes the hydrolysis of glutamine to ammonia, which is used by the large (or ammonia) chain to synthesize carbamoyl phosphate. Tetramer of heterodimers (alpha,beta)4.

It carries out the reaction hydrogencarbonate + L-glutamine + 2 ATP + H2O = carbamoyl phosphate + L-glutamate + 2 ADP + phosphate + 2 H(+). The enzyme catalyses L-glutamine + H2O = L-glutamate + NH4(+). Its pathway is amino-acid biosynthesis; L-arginine biosynthesis; carbamoyl phosphate from bicarbonate: step 1/1. It functions in the pathway pyrimidine metabolism; UMP biosynthesis via de novo pathway; (S)-dihydroorotate from bicarbonate: step 1/3. Its function is as follows. Small subunit of the glutamine-dependent carbamoyl phosphate synthetase (CPSase). CPSase catalyzes the formation of carbamoyl phosphate from the ammonia moiety of glutamine, carbonate, and phosphate donated by ATP, constituting the first step of 2 biosynthetic pathways, one leading to arginine and/or urea and the other to pyrimidine nucleotides. The small subunit (glutamine amidotransferase) binds and cleaves glutamine to supply the large subunit with the substrate ammonia. The polypeptide is Carbamoyl phosphate synthase small chain (Thermoplasma acidophilum (strain ATCC 25905 / DSM 1728 / JCM 9062 / NBRC 15155 / AMRC-C165)).